Here is a 197-residue protein sequence, read N- to C-terminus: HTH-type transcriptional repressor BdcR (197 aa).

An HTH tetR-type domain is found at 15–75 (RFAPEQAISA…RVLNEYVGTE (61 aa)). A DNA-binding region (H-T-H motif) is located at residues 38 to 57 (SVAEVTDYLGINPPSLYAAF).

Functionally, negatively regulates expression of bdcA. The protein is HTH-type transcriptional repressor BdcR (bdcR) of Escherichia coli (strain K12).